A 37-amino-acid chain; its full sequence is Defensin-A (37 aa).

3 disulfide bridges follow: Cys-4-Cys-25, Cys-10-Cys-33, and Cys-14-Cys-35.

Its subcellular location is the secreted. In terms of biological role, has antibacterial activity against M.luteus and E.coli. This Mytilus edulis (Blue mussel) protein is Defensin-A.